A 334-amino-acid polypeptide reads, in one-letter code: Geminin coiled-coil domain-containing protein 1 (334 aa).

Residues 82-119 (SQLYRNKQLQDTLVQKEEELARLHEENNHLRQYLNSAL) are a coiled coil. Positions 143 to 167 (FRKGKRKSKEQRYSPAEIPHPKNAK) are disordered.

Belongs to the GEMC1 family. Highly phosphorylated by CDK2; stimulates initiation of DNA replication.

Its subcellular location is the nucleus. In terms of biological role, regulator of DNA replication. Promotes initiation of chromosomal DNA replication by mediating TOPBP1- and CDK2-dependent recruitment of CDC45L onto replication origins. In Homo sapiens (Human), this protein is Geminin coiled-coil domain-containing protein 1 (GMNC).